Reading from the N-terminus, the 205-residue chain is Dephospho-CoA kinase (205 aa).

The DPCK domain maps to 5–201 (VVGLTGGIGS…QRYLQLSGNH (197 aa)). 13–18 (GSGKTT) contributes to the ATP binding site.

This sequence belongs to the CoaE family.

Its subcellular location is the cytoplasm. It carries out the reaction 3'-dephospho-CoA + ATP = ADP + CoA + H(+). Its pathway is cofactor biosynthesis; coenzyme A biosynthesis; CoA from (R)-pantothenate: step 5/5. Its function is as follows. Catalyzes the phosphorylation of the 3'-hydroxyl group of dephosphocoenzyme A to form coenzyme A. The sequence is that of Dephospho-CoA kinase from Shewanella oneidensis (strain ATCC 700550 / JCM 31522 / CIP 106686 / LMG 19005 / NCIMB 14063 / MR-1).